The following is a 231-amino-acid chain: 5'-methylthioadenosine/S-adenosylhomocysteine nucleosidase (231 aa).

The active-site Proton acceptor is the E12. Substrate-binding positions include G78, V153, and 174–175 (ME). Residue D198 is the Proton donor of the active site.

The protein belongs to the PNP/UDP phosphorylase family. MtnN subfamily.

The catalysed reaction is S-adenosyl-L-homocysteine + H2O = S-(5-deoxy-D-ribos-5-yl)-L-homocysteine + adenine. The enzyme catalyses S-methyl-5'-thioadenosine + H2O = 5-(methylsulfanyl)-D-ribose + adenine. It catalyses the reaction 5'-deoxyadenosine + H2O = 5-deoxy-D-ribose + adenine. Its pathway is amino-acid biosynthesis; L-methionine biosynthesis via salvage pathway; S-methyl-5-thio-alpha-D-ribose 1-phosphate from S-methyl-5'-thioadenosine (hydrolase route): step 1/2. Functionally, catalyzes the irreversible cleavage of the glycosidic bond in both 5'-methylthioadenosine (MTA) and S-adenosylhomocysteine (SAH/AdoHcy) to adenine and the corresponding thioribose, 5'-methylthioribose and S-ribosylhomocysteine, respectively. Also cleaves 5'-deoxyadenosine, a toxic by-product of radical S-adenosylmethionine (SAM) enzymes, into 5-deoxyribose and adenine. In Aliivibrio fischeri (strain MJ11) (Vibrio fischeri), this protein is 5'-methylthioadenosine/S-adenosylhomocysteine nucleosidase.